Here is a 199-residue protein sequence, read N- to C-terminus: MTEKEKMLAEKWYDANFDQYLINERARAKDICFELNHTRPSATNKRKELIDQLFQTTTDNVSISIPFDTDYGWNVKLGKNVYVNTNCYFMDGGQITIGDNVFIGPNCGFYTATHPLNFHHRNEGFEKAGPIHIGSNTWFGGHVAVLPGVTIGEGSVIGAGSVVTKDIPPHSLAVGNPCKVVRKIDNDLPSETLNDETIK.

The protein belongs to the transferase hexapeptide repeat family.

The chain is Putative acetyltransferase SACOL2570 from Staphylococcus aureus (strain COL).